Consider the following 172-residue polypeptide: MDLRKKIRIVEDFPIEGISFKDVTPILKDPKAMKHTTKEITKYLEDKNVDVIVGPEARGFLFGIPVAHELDIGFVPVRKPGKLPYKTFSVDYALEYGADSLEIHSDGIEKGQNVAIVDDLLATGGTVLGVSKLVEKLGGHVSALNFVIELTELKGRDKLKGYGIQSLVKYDL.

This sequence belongs to the purine/pyrimidine phosphoribosyltransferase family. As to quaternary structure, homodimer.

The protein resides in the cytoplasm. The catalysed reaction is AMP + diphosphate = 5-phospho-alpha-D-ribose 1-diphosphate + adenine. It participates in purine metabolism; AMP biosynthesis via salvage pathway; AMP from adenine: step 1/1. Catalyzes a salvage reaction resulting in the formation of AMP, that is energically less costly than de novo synthesis. This is Adenine phosphoribosyltransferase from Methanococcus maripaludis (strain C5 / ATCC BAA-1333).